A 464-amino-acid polypeptide reads, in one-letter code: Protein FAM90A8 (464 aa).

Disordered regions lie at residues 1-42 (MMAR…DPRL), 69-389 (VPAT…HDGA), and 415-437 (HSPE…SEAP). 2 stretches are compositionally biased toward basic and acidic residues: residues 74–89 (GKKE…KPRG) and 97–114 (NKDK…DPQR). Over residues 180-197 (LASLSPLRKASLSSSSSL) the composition is skewed to low complexity.

It belongs to the FAM90 family.

This chain is Protein FAM90A8 (FAM90A8), found in Homo sapiens (Human).